Consider the following 118-residue polypeptide: UPF0102 protein Cphy_2398 (118 aa).

This sequence belongs to the UPF0102 family.

This is UPF0102 protein Cphy_2398 from Lachnoclostridium phytofermentans (strain ATCC 700394 / DSM 18823 / ISDg) (Clostridium phytofermentans).